The following is a 388-amino-acid chain: MRPATRIFIKQRFTDYYDKARISPPSSVKEREFGFIFFDDRYPDDIRMRRHIGFSSGDEMQEYVKSLVPAHAYYSTAYYRTPQAPTMGDKEWLGADLIFDLDADHIMRGSYEAMLERIKGEAEKLLDVLDNELGIDMRTIKLVFSGGRGYHVHVQELAFRDFEPAERRELVDYVCGTGISPSLLLHDWKPGRRGWHDRFRLVLTRYLQDLSTRPIKEVKAELSSLRGVGQVMAERFAGMIPELITLLNTNPSSILLRDQTVRTVFGALTSERESTLLPHIREAAVQADEPVTTDTRRLIRLPGSLHAKSGFKVVPMEVKELHDFDPLIDAVAFGEREVIIESEREYSFSLLGSSYDIPKGRLKVPEAVGVFLCCRGMAEIGGVLDHAS.

Residues Asp100, Asp102, and Asp288 contribute to the active site.

The protein belongs to the eukaryotic-type primase small subunit family. In terms of assembly, heterodimer of a small subunit (PriS) and a large subunit (PriL). Mg(2+) serves as cofactor. It depends on Mn(2+) as a cofactor.

Its function is as follows. Catalytic subunit of DNA primase, an RNA polymerase that catalyzes the synthesis of short RNA molecules used as primers for DNA polymerase during DNA replication. The small subunit contains the primase catalytic core and has DNA synthesis activity on its own. Binding to the large subunit stabilizes and modulates the activity, increasing the rate of DNA synthesis while decreasing the length of the DNA fragments, and conferring RNA synthesis capability. The DNA polymerase activity may enable DNA primase to also catalyze primer extension after primer synthesis. May also play a role in DNA repair. In Methanospirillum hungatei JF-1 (strain ATCC 27890 / DSM 864 / NBRC 100397 / JF-1), this protein is DNA primase small subunit PriS.